Reading from the N-terminus, the 128-residue chain is Flagellar assembly factor FliW 1 (128 aa).

The protein belongs to the FliW family. As to quaternary structure, interacts with translational regulator CsrA and flagellin(s).

It localises to the cytoplasm. In terms of biological role, acts as an anti-CsrA protein, binds CsrA and prevents it from repressing translation of its target genes, one of which is flagellin. Binds to flagellin and participates in the assembly of the flagellum. The chain is Flagellar assembly factor FliW 1 from Wolinella succinogenes (strain ATCC 29543 / DSM 1740 / CCUG 13145 / JCM 31913 / LMG 7466 / NCTC 11488 / FDC 602W) (Vibrio succinogenes).